The sequence spans 837 residues: WW domain-containing protein tag-325 (837 aa).

Polar residues predominate over residues 1–11 (MTTAVQPSDTT). The tract at residues 1 to 66 (MTTAVQPSDT…SNGQNYADDP (66 aa)) is disordered. Over residues 33-43 (SESAESSSSSS) the composition is skewed to low complexity. Residues 44 to 61 (QTNVSAANTLPRESNGQN) are compositionally biased toward polar residues. The 34-residue stretch at 96 to 129 (RDLLNGWFEYETDVGRTFFFNKETGKSQWIPPRF) folds into the WW domain. Residues 150 to 161 (TCSFQGSSTSSS) show a composition bias toward low complexity. 5 disordered regions span residues 150–181 (TCSF…RKSQ), 194–257 (DDVD…STAS), 338–403 (TTSS…EPAE), 548–574 (MRRR…EPRP), and 778–800 (KNKK…TPVQ). Residues 162–181 (EEQKENKMRESLADDDRKSQ) show a composition bias toward basic and acidic residues. Residues 247–257 (PTSSRKASTAS) are compositionally biased toward polar residues. Residues 371–403 (RCEERRGSGDGREPVRTIRCGDLERSENDEPAE) are compositionally biased toward basic and acidic residues. One can recognise a PH domain in the interval 386–505 (RTIRCGDLER…WYKSLEEVVA (120 aa)). A compositionally biased stretch (polar residues) spans 556–569 (SQSAIETVSTSVST). One can recognise a Rho-GAP domain in the interval 610–827 (STLSAICQHE…YLLESANKFD (218 aa)). The segment covering 778-788 (KNKKAGKKAKP) has biased composition (basic residues).

The polypeptide is WW domain-containing protein tag-325 (tag-325) (Caenorhabditis elegans).